A 49-amino-acid chain; its full sequence is Astexin-2 (49 aa).

Residues 1–25 (MTKRTTIAARRVGLIDLGKATRQTK) constitute a propeptide that is removed on maturation. Residues 26 to 34 (GLTQIQALD) constitute a cross-link (isoaspartyl glycine isopeptide (Gly-Asp)).

Post-translationally, this lasso peptide is hydrolyzed to a linear form by the isopeptidase AtxE2, in vitro. The isopeptidase AtxE2 only recognizes the threaded form (but not the unthreaded form).

It is found in the cytoplasm. The protein localises to the secreted. Its function is as follows. Shows weak antimicrobial activity against its phylogenetic relative Caulobacter crescentus. Does not show activity against other bacteria tested (E.coli, Vibrio sp, Burkhoderia thailandensis, and Salmonella newport). This chain is Astexin-2, found in Asticcacaulis excentricus (strain ATCC 15261 / DSM 4724 / KCTC 12464 / NCIMB 9791 / VKM B-1370 / CB 48).